Here is a 1286-residue protein sequence, read N- to C-terminus: CLIP-associating protein 2 (1286 aa).

A golgi localization region spans residues 1–40; it reads MRRLICKRICDYKSFDDEESVDGNRPSSAASAFKVPAPKT. Phosphoserine occurs at positions 14 and 20. The segment at 17-67 is disordered; that stretch reads DEESVDGNRPSSAASAFKVPAPKTPGNPVSSARKPGSAGGPKVGGPSKEGG. Gly residues predominate over residues 53–67; that stretch reads SAGGPKVGGPSKEGG. The segment at 66-317 is TOG 1; the sequence is GGAGAVDEDD…KSLQTYLKSS (252 aa). HEAT repeat units follow at residues 179-214, 215-251, and 256-293; these read HGAEAIVPTLFNLVPNSAKVMATSGCAAIRFIIRHT, HVPRLIPLITSNCTSKSVPVRRRSFEFLDLLLQEWQT, and RHAAVLVETIKKGIHDADAEARVEARKTYMGLRNHFPG. The disordered stretch occupies residues 320–374; it reads VASLPQSDRSSSSSQESLNRPFSSKWSTANPSTVAGRVSVGGSKANPLPGSLQRS. Phosphoserine occurs at positions 322, 333, and 336. Residues 322–340 show a composition bias toward low complexity; that stretch reads SLPQSDRSSSSSQESLNRP. Residues 341–352 show a composition bias toward polar residues; sequence FSSKWSTANPST. A phosphoserine mark is found at Ser-374, Ser-376, and Ser-413. Residues 411–473 are disordered; sequence YASLEDTSDK…GSRSGSPGRV (63 aa). The segment covering 417–431 has biased composition (basic and acidic residues); it reads TSDKMDGTASDDGRV. Residues 450–565 are interaction with microtubules, MAPRE1 and MAPRE3; it reads RGRSRTKMVS…GPGYGISQSS (116 aa). The span at 459–473 shows a compositional bias: low complexity; sequence SQSQPGSRSGSPGRV. Ser-461, Ser-465, Ser-469, Ser-484, and Ser-495 each carry phosphoserine. A disordered region spans residues 493–564; the sequence is SASAQKRSKI…LGPGYGISQS (72 aa). The short motif at 500–503 is the SXIP motif 1; mediates interaction with MAPRE1 and targeting to microtubule plus ends element; the sequence is SKIP. Residue Ser-513 is modified to Phosphoserine. The SXIP motif 2; mediates interaction with MAPRE1 and targeting to microtubule plus ends signature appears at 523–526; the sequence is SRIP. 7 positions are modified to phosphoserine: Ser-531, Ser-535, Ser-570, Ser-572, Ser-581, Ser-614, and Ser-620. Basic and acidic residues predominate over residues 605-616; the sequence is RRYESYGMHSDD. Positions 605–638 are disordered; the sequence is RRYESYGMHSDDDANSDASSACSERSYSSRNGSI. The segment covering 620 to 634 has biased composition (low complexity); it reads SDASSACSERSYSSR. Positions 642–873 are TOG 2; that stretch reads MRQTEDVAEV…TKLLHNHLRN (232 aa). 2 HEAT repeats span residues 702–739 and 764–801; these read KVFSMFLETLVDFIQVHKDDLQDWLFVLLTQLLKKMGA and LQFNILMRFTVDQTQTPSLKVKVAILKYIETLAKQMDP. Thr-779 carries the post-translational modification Phosphothreonine. The interaction with RSN and localization to the Golgi and kinetochores stretch occupies residues 864–1286; it reads TKLLHNHLRN…DPTADVSGQS (423 aa). Disordered regions lie at residues 870 to 920 and 944 to 989; these read HLRN…FDYD and SFRS…SQPA. Composition is skewed to polar residues over residues 872–884 and 893–914; these read RNTGNGTQSSMGS and SPANWSSPLTSPTNTSQNTLSP. Ser-884 carries the post-translational modification Phosphoserine. A phosphoserine mark is found at Ser-944, Ser-947, Ser-1005, and Ser-1021. The span at 947–964 shows a compositional bias: basic and acidic residues; the sequence is SQEDMSEPVRRDPKKEDG. Residues 1009–1286 form a required for cortical localization region; sequence RDYNPYNYSD…DPTADVSGQS (278 aa). 3 HEAT repeats span residues 1046–1083, 1090–1127, and 1208–1245; these read LDHSDLVAELLKELSNHNERIEERKIALYELMKLTQEE, EHFKTILLLLLETLGDKEPTIRALALKVLKEILRHQPA, and MLLPEIMPGLIQGYDNSESSVRKACVFCLVAVHAVIGD.

It belongs to the CLASP family. Interacts with microtubules. Interacts with MAPRE1; probably required for targeting to growing microtubule plus ends. Interacts with ERC1, MAPRE3 and PHLDB2. The interaction with ERC1 may be mediated by PHLDB2. Interacts with GCC2; recruits CLASP2 to Golgi membranes. Interacts with CLIP2 and RSN. Interacts with MACF1. Interacts with mtcl2. Interacts with MTCL1. Phosphorylated by GSK3B. Phosphorylation by GSK3B may negatively regulate binding to microtubule lattices in lamella. Isoform 2 is phosphorylated on Ser-241. As to expression, highly expressed in brain and at low levels in heart, kidney and lung.

The protein resides in the cytoplasm. It is found in the cytoskeleton. It localises to the microtubule organizing center. Its subcellular location is the centrosome. The protein localises to the chromosome. The protein resides in the centromere. It is found in the kinetochore. It localises to the spindle. Its subcellular location is the spindle pole. The protein localises to the golgi apparatus. The protein resides in the trans-Golgi network. It is found in the cell membrane. It localises to the cell projection. Its subcellular location is the ruffle membrane. The protein localises to the cell cortex. In terms of biological role, microtubule plus-end tracking protein that promotes the stabilization of dynamic microtubules. Involved in the nucleation of noncentrosomal microtubules originating from the trans-Golgi network (TGN). Required for the polarization of the cytoplasmic microtubule arrays in migrating cells towards the leading edge of the cell. May act at the cell cortex to enhance the frequency of rescue of depolymerizing microtubules by attaching their plus-ends to cortical platforms composed of ERC1 and PHLDB2. This cortical microtubule stabilizing activity is regulated at least in part by phosphatidylinositol 3-kinase signaling. Also performs a similar stabilizing function at the kinetochore which is essential for the bipolar alignment of chromosomes on the mitotic spindle. Acts as a mediator of ERBB2-dependent stabilization of microtubules at the cell cortex. The polypeptide is CLIP-associating protein 2 (Clasp2) (Mus musculus (Mouse)).